Here is a 508-residue protein sequence, read N- to C-terminus: MFSQLVVWLLATSTVCLAWDNSWIMDMKYERYSQRRSYYLAEEEDRSVGSDIELTAKEQVVNERLMELKMTELKNGLQDPAGFIPWNHIFDVLYRINSSELFHIIQKMPKGGILHAHDTALCSTDYVISLTYEPNLWQCADPTTGAFQFLFSREAPTNTDTCTWTLVADERAKQGEENYNSALRSQLSMYNTNPIMHNRDVDSIWRQFMGIFGVNGGLLTYAPVWKAYYLQFLKEMFADGVQYLELRTTLPPLYDLDGKTYNEVEIMQIYYDATKEFKKQNPTFIGAKIIYAPVRVVDDAGIPALMAKVRELHEKFPDFMAGFDLVGQEDKGRPLIAFSREILKLPNSIDFYFHAGETNWDGMTDDNLIDAVLLGTKRIGHGYAVLKHPRVLKEVKRNKIAIEVCPASNQVLRLVADYRNHPGSVLLANKEYPVVISSDDPSFWEAKPLSHDFYMAFLGLASSRQDLRLLKQLAINSIKYSAMSPREKLQAMQMWEAEWKKFIDGFNA.

Positions 1-18 (MFSQLVVWLLATSTVCLA) are cleaved as a signal peptide.

This sequence belongs to the metallo-dependent hydrolases superfamily. Adenosine and AMP deaminases family. ADGF subfamily. Zn(2+) serves as cofactor. In terms of tissue distribution, salivary gland (at protein level).

It is found in the secreted. The enzyme catalyses adenosine + H2O + H(+) = inosine + NH4(+). In terms of biological role, catalyzes the deamination of adenosine to inosine. The protein is Adenosine deaminase of Lutzomyia longipalpis (Sand fly).